The primary structure comprises 530 residues: C2H2-type transcription factor MSN2 (530 aa).

2 consecutive C2H2-type zinc fingers follow at residues Phe409–His432 and Phe438–His460.

The protein resides in the nucleus. Its subcellular location is the cytoplasm. Functionally, transcription factor that acts as a key downstream transcription factor in the HOG1-MAPK pathway. Plays crucial roles in the regulation of conidiation, virulence and multi-stress responses. In addition to regulating the expression of genes specifically involved in stress-response, conidiation and virulence, controls also expression of cellular signaling factors. This Metarhizium robertsii (strain ARSEF 23 / ATCC MYA-3075) (Metarhizium anisopliae (strain ARSEF 23)) protein is C2H2-type transcription factor MSN2.